A 323-amino-acid chain; its full sequence is tRNA dimethylallyltransferase (323 aa).

27–34 (GPTGSGKT) contributes to the ATP binding site. 29–34 (TGSGKT) is a substrate binding site. 2 interaction with substrate tRNA regions span residues 52-55 (DSRQ) and 176-180 (QRIVR).

The protein belongs to the IPP transferase family. As to quaternary structure, monomer. The cofactor is Mg(2+).

The enzyme catalyses adenosine(37) in tRNA + dimethylallyl diphosphate = N(6)-dimethylallyladenosine(37) in tRNA + diphosphate. Its function is as follows. Catalyzes the transfer of a dimethylallyl group onto the adenine at position 37 in tRNAs that read codons beginning with uridine, leading to the formation of N6-(dimethylallyl)adenosine (i(6)A). This is tRNA dimethylallyltransferase from Desulfovibrio desulfuricans (strain ATCC 27774 / DSM 6949 / MB).